Reading from the N-terminus, the 467-residue chain is Congo red hypersensitive protein 2 (467 aa).

A signal peptide spans 1–23 (MAIVNSWLICLVSIFSFVVRVEA). A glycan (N-linked (GlcNAc...) asparagine) is linked at Asn28. A disulfide bridge links Cys56 with Cys67. In terms of domain architecture, GH16 spans 63-280 (SHDSCMPVPI…WSGGEINWDA (218 aa)). A glycan (N-linked (GlcNAc...) asparagine) is linked at Asn96. Glu166 functions as the Nucleophile in the catalytic mechanism. Residue Glu170 is the Proton donor of the active site. Residue Glu170 coordinates chitin. Asn190, Asn196, Asn233, and Asn237 each carry an N-linked (GlcNAc...) asparagine glycan. Position 257 (Trp257) interacts with chitin. N-linked (GlcNAc...) asparagine glycosylation occurs at Asn261. A chitin-binding site is contributed by Thr268. Residues Asn297 and Asn310 are each glycosylated (N-linked (GlcNAc...) asparagine). A disordered region spans residues 337–444 (MDSDEGSGLD…SSSTSSMSGN (108 aa)). Over residues 351–444 (ATTSSTQKSS…SSSTSSMSGN (94 aa)) the composition is skewed to low complexity. The GPI-anchor amidated asparagine moiety is linked to residue Asn445. The propeptide at 446–467 (AGANVAANWRLTVLCVILGYVL) is removed in mature form.

It belongs to the glycosyl hydrolase 16 family. CRH1 subfamily. In terms of processing, the GPI-anchor is attached to the protein in the endoplasmic reticulum and serves to target the protein to the cell surface. There, the glucosamine-inositol phospholipid moiety is cleaved off and the GPI-modified mannoprotein is covalently attached via its lipidless GPI glycan remnant to the 1,6-beta-glucan of the outer cell wall layer.

The protein resides in the secreted. It localises to the cell wall. Its subcellular location is the membrane. The catalysed reaction is Random endo-hydrolysis of N-acetyl-beta-D-glucosaminide (1-&gt;4)-beta-linkages in chitin and chitodextrins.. Its function is as follows. Dual chitinase/transglycosylase that plays a role in cell wall architecture. Chitinase and transglycosylase activities are coupled. Required for the polysaccharide cross-linking at the septa and the cell wall. More specifically, transfers chitin to both beta(1-3)- and beta(1-6)glucan in the cell wall. The minimal number of intact hexopyranose units required in the molecule of the acceptor oligosaccharide is two and the effectivity of the acceptor increased with the increasing length of its oligosaccharide chain. This Saccharomyces cerevisiae (strain ATCC 204508 / S288c) (Baker's yeast) protein is Congo red hypersensitive protein 2.